The primary structure comprises 191 residues: Thymidylate kinase (191 aa).

7 to 14 (GVDGAGKS) is an ATP binding site.

Belongs to the thymidylate kinase family.

The catalysed reaction is dTMP + ATP = dTDP + ADP. In terms of biological role, phosphorylation of dTMP to form dTDP in both de novo and salvage pathways of dTTP synthesis. The sequence is that of Thymidylate kinase from Helicobacter pylori (strain Shi470).